A 241-amino-acid chain; its full sequence is Sugar fermentation stimulation protein homolog (241 aa).

This sequence belongs to the SfsA family.

The sequence is that of Sugar fermentation stimulation protein homolog from Halorhodospira halophila (strain DSM 244 / SL1) (Ectothiorhodospira halophila (strain DSM 244 / SL1)).